A 153-amino-acid chain; its full sequence is ATP synthase subunit b' (153 aa).

A helical membrane pass occupies residues 23–40 (LMAIQVVALTYILNSLFF).

It belongs to the ATPase B chain family. As to quaternary structure, F-type ATPases have 2 components, F(1) - the catalytic core - and F(0) - the membrane proton channel. F(1) has five subunits: alpha(3), beta(3), gamma(1), delta(1), epsilon(1). F(0) has four main subunits: a(1), b(1), b'(1) and c(10-14). The alpha and beta chains form an alternating ring which encloses part of the gamma chain. F(1) is attached to F(0) by a central stalk formed by the gamma and epsilon chains, while a peripheral stalk is formed by the delta, b and b' chains.

The protein localises to the cellular thylakoid membrane. F(1)F(0) ATP synthase produces ATP from ADP in the presence of a proton or sodium gradient. F-type ATPases consist of two structural domains, F(1) containing the extramembraneous catalytic core and F(0) containing the membrane proton channel, linked together by a central stalk and a peripheral stalk. During catalysis, ATP synthesis in the catalytic domain of F(1) is coupled via a rotary mechanism of the central stalk subunits to proton translocation. In terms of biological role, component of the F(0) channel, it forms part of the peripheral stalk, linking F(1) to F(0). The b'-subunit is a diverged and duplicated form of b found in plants and photosynthetic bacteria. This chain is ATP synthase subunit b', found in Prochlorococcus marinus (strain MIT 9301).